Here is a 501-residue protein sequence, read N- to C-terminus: Probable leucine aminopeptidase 2 (501 aa).

An N-terminal signal peptide occupies residues 1–18 (MVTMKLLYLTSFASLAVA). One can recognise a PA domain in the interval 119 to 216 (SPSVNATAPL…ADGQALIQMI (98 aa)). N-linked (GlcNAc...) asparagine glycans are attached at residues asparagine 123 and asparagine 233. Histidine 257 and aspartate 269 together coordinate Zn(2+). Glutamate 301 acts as the Proton acceptor in catalysis. Glutamate 302 is a binding site for Zn(2+). Asparagine 316 carries an N-linked (GlcNAc...) asparagine glycan. A Zn(2+)-binding site is contributed by aspartate 330. A glycan (N-linked (GlcNAc...) asparagine) is linked at asparagine 350. Position 428 (histidine 428) interacts with Zn(2+). Residues asparagine 433 and asparagine 467 are each glycosylated (N-linked (GlcNAc...) asparagine). The segment at 480-501 (AMKRTPHTHTGGTGCYKDRVEQ) is disordered.

This sequence belongs to the peptidase M28 family. M28A subfamily. As to quaternary structure, monomer. Zn(2+) is required as a cofactor.

It is found in the secreted. Functionally, extracellular aminopeptidase that releases a wide variety of amino acids from natural peptides and contributes to pathogenicity. The protein is Probable leucine aminopeptidase 2 (lap2) of Aspergillus fumigatus (strain ATCC MYA-4609 / CBS 101355 / FGSC A1100 / Af293) (Neosartorya fumigata).